Reading from the N-terminus, the 525-residue chain is MSRQFTCKSGAAAKGGFSGCSAVLSGGSTSSYRAGGKGLSGGFGSRSLYNLGGVRSISFNVASGSGKSGGYGFGRGRASGFAGSMFGSVALGPMCPTVCPPGGIHQVTVNESLLAPLNVELDPEIQKVRAQEREQIKALNNKFASFIDKVRFLEQQNQVLETKWELLQQLDLNNCKNNLEPILEGYISNLRKQLETLSGDRVRLDSELRSVRDVVEDYKKRYEEEINRRTAAENEFVLLKKDVDAAYANKVELQAKVDSMDQEIKFFKCLYEAEIAQIQSHISDMSVILSMDNNRDLNLDSIIDEVRAQYEDIALKSKAEAEALYQTKFQELQLAAGRHGDDLKNTKNEISELTRLIQRIRSEIENVKKQASNLETAIADAEQRGDNALKDARAKLDELEAALHQSKEELARMMREYQELMSLKLALDMEIATYRKLLESEECRMSGEFPSPVSISIISSTSGSGGYGFRPSSVSGGYVANSGSCISGVCSVRGGESRSRSSTTDYKDALGKGSSLSAPSKKASR.

The segment at 1 to 131 is head; the sequence is MSRQFTCKSG…DPEIQKVRAQ (131 aa). The interval 132–167 is coil 1A; the sequence is EREQIKALNNKFASFIDKVRFLEQQNQVLETKWELL. Positions 132–445 constitute an IF rod domain; sequence EREQIKALNN…KLLESEECRM (314 aa). The interval 168–186 is linker 1; the sequence is QQLDLNNCKNNLEPILEGY. Positions 187-278 are coil 1B; the sequence is ISNLRKQLET…CLYEAEIAQI (92 aa). The interval 279–302 is linker 12; sequence QSHISDMSVILSMDNNRDLNLDSI. Residues 303-441 form a coil 2 region; that stretch reads IDEVRAQYED…ATYRKLLESE (139 aa). The segment at 442-525 is tail; sequence ECRMSGEFPS…LSAPSKKASR (84 aa). The tract at residues 492–525 is disordered; it reads VRGGESRSRSSTTDYKDALGKGSSLSAPSKKASR. Residues 495–510 show a composition bias toward basic and acidic residues; sequence GESRSRSSTTDYKDAL.

This sequence belongs to the intermediate filament family. In terms of assembly, heterodimer of a type I and a type II keratin. Associates with KRT16 and/or KRT17.

The protein resides in the cytoplasm. It is found in the cytoskeleton. Its function is as follows. Plays a central role in hair formation. Essential component of keratin intermediate filaments in the inner root sheath (IRS) of the hair follicle. The protein is Keratin, type II cytoskeletal 71 (KRT71) of Bos taurus (Bovine).